Here is a 161-residue protein sequence, read N- to C-terminus: UPF0178 protein Rsph17025_3122 (161 aa).

This sequence belongs to the UPF0178 family.

This chain is UPF0178 protein Rsph17025_3122, found in Cereibacter sphaeroides (strain ATCC 17025 / ATH 2.4.3) (Rhodobacter sphaeroides).